We begin with the raw amino-acid sequence, 95 residues long: UPF0213 protein PEPE_0875 (95 aa).

The GIY-YIG domain occupies asparagine 7–lysine 82.

It belongs to the UPF0213 family.

The polypeptide is UPF0213 protein PEPE_0875 (Pediococcus pentosaceus (strain ATCC 25745 / CCUG 21536 / LMG 10740 / 183-1w)).